The chain runs to 205 residues: Cytochrome c biogenesis ATP-binding export protein CcmA 2 (205 aa).

Positions 2-205 (LEARDLYCER…LALTGGGAGL (204 aa)) constitute an ABC transporter domain. 34–41 (GGNGAGKT) lines the ATP pocket.

Belongs to the ABC transporter superfamily. CcmA exporter (TC 3.A.1.107) family. As to quaternary structure, the complex is composed of two ATP-binding proteins (CcmA) and two transmembrane proteins (CcmB).

It localises to the cell inner membrane. It carries out the reaction heme b(in) + ATP + H2O = heme b(out) + ADP + phosphate + H(+). Part of the ABC transporter complex CcmAB involved in the biogenesis of c-type cytochromes; once thought to export heme, this seems not to be the case, but its exact role is uncertain. Responsible for energy coupling to the transport system. This Salmonella typhimurium (strain LT2 / SGSC1412 / ATCC 700720) protein is Cytochrome c biogenesis ATP-binding export protein CcmA 2.